We begin with the raw amino-acid sequence, 239 residues long: Purine nucleoside phosphorylase DeoD-type (239 aa).

Residue His-5 participates in a purine D-ribonucleoside binding. Phosphate contacts are provided by Gly-21 and Arg-25. Lys-27 bears the N6-acetyllysine mark. Residues Arg-44 and 88–91 (RVGS) each bind phosphate. Residues 180–182 (EME) and 204–205 (SD) contribute to the a purine D-ribonucleoside site. The active-site Proton donor is the Asp-205.

This sequence belongs to the PNP/UDP phosphorylase family. In terms of assembly, homohexamer; trimer of homodimers.

It carries out the reaction a purine D-ribonucleoside + phosphate = a purine nucleobase + alpha-D-ribose 1-phosphate. The enzyme catalyses a purine 2'-deoxy-D-ribonucleoside + phosphate = a purine nucleobase + 2-deoxy-alpha-D-ribose 1-phosphate. In terms of biological role, catalyzes the reversible phosphorolytic breakdown of the N-glycosidic bond in the beta-(deoxy)ribonucleoside molecules, with the formation of the corresponding free purine bases and pentose-1-phosphate. The chain is Purine nucleoside phosphorylase DeoD-type from Shigella dysenteriae serotype 1 (strain Sd197).